The chain runs to 819 residues: Metabotropic glutamate receptor-like protein O (819 aa).

The N-terminal stretch at 1 to 19 (MKKVFFLILILNCVVGALS) is a signal peptide. Residues 20–394 (NKNICKISLL…FVDSYSNSIK (375 aa)) lie on the Extracellular side of the membrane. 6 N-linked (GlcNAc...) asparagine glycosylation sites follow: Asn99, Asn185, Asn277, Asn295, Asn330, and Asn370. Residues 395–415 (ISILSVSIFCIFICVLGMIFI) form a helical membrane-spanning segment. The Cytoplasmic segment spans residues 416-428 (TVLRNARILKSSS). A helical transmembrane segment spans residues 429 to 449 (PSFLLLILFGCIVIFTGCILF). Topologically, residues 450–457 (SQPATDKT) are extracellular. Residues 458–478 (CQGRVWLLSIGYTIFLGSLLI) traverse the membrane as a helical segment. Residues 479–503 (KNWRVWLLFDNKKLRKRSITNWKLY) lie on the Cytoplasmic side of the membrane. Residues 504-524 (PWVAGILVVDVLILALWQGLG) form a helical membrane-spanning segment. The Extracellular portion of the chain corresponds to 525-550 (DIKSESRIIGTSFYQYTNVCTNNDQG). A helical membrane pass occupies residues 551–571 (SIALYILLAFHGLKLLGTCFI). The Cytoplasmic segment spans residues 572 to 587 (SFKIKLVDIEEFNESK). A helical transmembrane segment spans residues 588-608 (PITTSVFIILFCIFTIILLIA). The Extracellular portion of the chain corresponds to 609–624 (PSSSSSSASSPQPIAS). The helical transmembrane segment at 625-645 (LETIICICSVTTTAISIGLLF) threads the bilayer. Topologically, residues 646–819 (GDKIYFITTQ…NNENEIISDT (174 aa)) are cytoplasmic. Residues 674–819 (KDCDDDDDDS…NNENEIISDT (146 aa)) are disordered. Over residues 695 to 712 (NKNKNKNRNQSEKKKRPN) the composition is skewed to basic residues. Over residues 726 to 739 (ESVVFNPPSNNDLT) the composition is skewed to polar residues. A compositionally biased stretch (basic and acidic residues) spans 748-768 (GIKEGHGHDSENNDEYEHHED). The segment covering 769–798 (EDHEYEGEGEDEDHEDEYEVENDIEQEQEQ) has biased composition (acidic residues). Residues 799–808 (ESSNISISTK) are compositionally biased toward low complexity.

In the N-terminal section; belongs to the BMP lipoprotein family. The protein in the C-terminal section; belongs to the G-protein coupled receptor 3 family. GABA-B receptor subfamily.

The protein localises to the membrane. The sequence is that of Metabotropic glutamate receptor-like protein O (grlO) from Dictyostelium discoideum (Social amoeba).